Consider the following 304-residue polypeptide: Small glutamine-rich tetratricopeptide repeat-containing protein beta (304 aa).

4 TPR repeats span residues 15 to 49 (LREQ…SPED), 85 to 118 (ADQL…DPNN), 120 to 152 (VYYC…DSKY), and 153 to 186 (SKAY…DPEN). Residue K131 is modified to N6-acetyllysine. Phosphoserine is present on residues S293, S295, and S297.

Belongs to the SGT family. Homooligomerize.

In terms of biological role, co-chaperone that binds directly to HSC70 and HSP70 and regulates their ATPase activity. The chain is Small glutamine-rich tetratricopeptide repeat-containing protein beta (Sgtb) from Mus musculus (Mouse).